The primary structure comprises 199 residues: MPNYKLLYFNMRGRAEIIRYIFAYLDIKYEDHRIEQADWPKIKPTLPFGKIPVLEVEGLTLHQSLAIARYLTKNTDLAGKTELEQCQVDAVVDTLDDFMSLFPWAEENQDLKERTFNDLLTRQAPHLLKDLDTYLGDKEWFIGNYVTWADFYWDICSTTLLVLKPDLLGIYPRLVSLRNKVQAIPAISAWILKRPQTKL.

The GST N-terminal domain occupies 2–79 (PNYKLLYFNM…YLTKNTDLAG (78 aa)). Glutathione-binding positions include Tyr-8, Arg-14, Trp-39, 49 to 51 (GKI), and 63 to 64 (QS). In terms of domain architecture, GST C-terminal spans 81–199 (TELEQCQVDA…WILKRPQTKL (119 aa)).

The protein belongs to the GST superfamily. Sigma family. Homodimer. It depends on glutathione as a cofactor. As to expression, highly expressed in spleen and bone marrow. Lower levels of expression in small intestine, colon, liver, pancreas and skin. Not detected in brain, heart, lung or kidney (at protein level).

It localises to the cytoplasm. It catalyses the reaction prostaglandin H2 = prostaglandin D2. The catalysed reaction is RX + glutathione = an S-substituted glutathione + a halide anion + H(+). It carries out the reaction 2-glyceryl-prostaglandin H2 = 2-glyceryl-prostaglandin D2. In terms of biological role, bifunctional enzyme which catalyzes both the conversion of PGH2 to PGD2, a prostaglandin involved in smooth muscle contraction/relaxation and a potent inhibitor of platelet aggregation, and the conjugation of glutathione with a wide range of aryl halides and organic isothiocyanates. Also exhibits low glutathione-peroxidase activity towards cumene hydroperoxide. In Rattus norvegicus (Rat), this protein is Hematopoietic prostaglandin D synthase.